A 306-amino-acid chain; its full sequence is tRNA dimethylallyltransferase 1 (306 aa).

Residue 13–20 (GPTASGKT) participates in ATP binding. Substrate is bound at residue 15–20 (TASGKT). The segment at 38-41 (DSRQ) is interaction with substrate tRNA.

This sequence belongs to the IPP transferase family. Monomer. Requires Mg(2+) as cofactor.

The enzyme catalyses adenosine(37) in tRNA + dimethylallyl diphosphate = N(6)-dimethylallyladenosine(37) in tRNA + diphosphate. Catalyzes the transfer of a dimethylallyl group onto the adenine at position 37 in tRNAs that read codons beginning with uridine, leading to the formation of N6-(dimethylallyl)adenosine (i(6)A). The chain is tRNA dimethylallyltransferase 1 from Azobacteroides pseudotrichonymphae genomovar. CFP2.